The following is a 193-amino-acid chain: Holliday junction branch migration complex subunit RuvA (193 aa).

Residues 1-64 are domain I; sequence MIGRIAGTLL…EDAHLLFGFA (64 aa). Positions 65–144 are domain II; the sequence is TATERNTFRE…DLGHAPGATP (80 aa). Residues 145 to 151 form a flexible linker region; the sequence is LADSAVD. Residues 151-193 are domain III; sequence DILNALLALGYSEKEAAQAIKQVPAGTGVSDGIKLALKALSKG.

This sequence belongs to the RuvA family. As to quaternary structure, homotetramer. Forms an RuvA(8)-RuvB(12)-Holliday junction (HJ) complex. HJ DNA is sandwiched between 2 RuvA tetramers; dsDNA enters through RuvA and exits via RuvB. An RuvB hexamer assembles on each DNA strand where it exits the tetramer. Each RuvB hexamer is contacted by two RuvA subunits (via domain III) on 2 adjacent RuvB subunits; this complex drives branch migration. In the full resolvosome a probable DNA-RuvA(4)-RuvB(12)-RuvC(2) complex forms which resolves the HJ.

The protein resides in the cytoplasm. The RuvA-RuvB-RuvC complex processes Holliday junction (HJ) DNA during genetic recombination and DNA repair, while the RuvA-RuvB complex plays an important role in the rescue of blocked DNA replication forks via replication fork reversal (RFR). RuvA specifically binds to HJ cruciform DNA, conferring on it an open structure. The RuvB hexamer acts as an ATP-dependent pump, pulling dsDNA into and through the RuvAB complex. HJ branch migration allows RuvC to scan DNA until it finds its consensus sequence, where it cleaves and resolves the cruciform DNA. This is Holliday junction branch migration complex subunit RuvA from Cupriavidus metallidurans (strain ATCC 43123 / DSM 2839 / NBRC 102507 / CH34) (Ralstonia metallidurans).